Reading from the N-terminus, the 213-residue chain is Ras-related protein Rab-2 (213 aa).

Residues Thr-15, Gly-16, Gly-18, Lys-19, Ser-20, Cys-21, Gln-32, Pro-33, His-35, Thr-38, Gly-64, Asn-119, Asp-122, and Ala-150 each contribute to the GTP site. Mg(2+) is bound at residue Ser-20. A Mg(2+)-binding site is contributed by Thr-38. The tract at residues 190–213 (QHSPTNPSLPGAGGAAGAANSGCC) is disordered. Residues Cys-212 and Cys-213 are each lipidated (S-geranylgeranyl cysteine).

Belongs to the small GTPase superfamily. Rab family. In terms of assembly, interacts (GTP-bound form) with Vps16A and Vps39; the interaction with Vps39 is probably direct.

The protein resides in the vesicle. The protein localises to the cytoplasmic vesicle. It localises to the cell projection. Its subcellular location is the axon. It is found in the presynapse. The protein resides in the presynaptic active zone. The protein localises to the golgi apparatus. It localises to the trans-Golgi network. Its subcellular location is the perikaryon. It is found in the autophagosome membrane. The protein resides in the autolysosome membrane. It catalyses the reaction GTP + H2O = GDP + phosphate + H(+). Its function is as follows. May be involved in bidirectional endoplasmic reticulum (ER) to Golgi trafficking. Together with Rab7 involved in promoting fusion of autophagosomes and endosomes with lysosomes, probably through recruitment of the HOPS tethering complex. Involved in biosynthetic transport to lysosomes. In larval motor neurons, mediates the biogenesis of presynaptic cargo vesicles and their long-range axonal trafficking to synaptic termini. Not involved in axonal trafficking of mitochondria. During vesicle biogenesis, active zone proteins (including brp/Bruchpilot) and synaptic vesicle proteins (including VGlut) are sorted from the trans-Golgi in a Rab2-dependent manner via, at least, two independent routes. Acts upstream of Arl8 during presynaptic precursor vesicle biogenesis. Associated with lysosomal marker positive presynaptic cargo vesicles during anterograde and retrograde axonal trafficking, probably while in its GTP-bound active state. Involved in the delivery of presynaptic cargos, but not presynapse assembly or active zone function at synaptic termini. Required for autophagocytosis-dependent remodeling of myofibrils and transverse-tubules (T-tubules) during metamorphosis. The sequence is that of Ras-related protein Rab-2 from Drosophila melanogaster (Fruit fly).